Consider the following 352-residue polypeptide: Ion-translocating oxidoreductase complex subunit D (352 aa).

A run of 5 helical transmembrane segments spans residues 20-40, 42-62, 78-109, 123-143, and 148-168; these read IMLLVLLAAVPGIAAQLWFFG, GTLVQILLASVSALLAEALVL, ALLTGLLLAVSIPPLAPWWMVVLGTVFAVIIA, PAMIGYVVLLISFPVQMTSWL, and IAVNIPGFIDAIQVIFSGHTA. Threonine 187 carries the FMN phosphoryl threonine modification. A run of 5 helical transmembrane segments spans residues 214–234, 242–262, 267–287, 301–321, and 322–342; these read ILAGAGWQWVNLAWLAGGVWL, WHIPLSFLVTLALCAMLGWLF, LAAPQIHLLSGATMLGAFFIL, LIFGALAGLLVWLIRSFGGYP, and DGVAFAVLLANITVPLIDYYT.

It belongs to the NqrB/RnfD family. In terms of assembly, the complex is composed of six subunits: RsxA, RsxB, RsxC, RsxD, RsxE and RsxG. FMN is required as a cofactor.

It localises to the cell inner membrane. Functionally, part of a membrane-bound complex that couples electron transfer with translocation of ions across the membrane. Required to maintain the reduced state of SoxR. Probably transfers electron from NAD(P)H to SoxR. The sequence is that of Ion-translocating oxidoreductase complex subunit D from Escherichia coli (strain K12).